The primary structure comprises 306 residues: Putative S-adenosyl-L-methionine-dependent methyltransferase Mvan_1345 (306 aa).

S-adenosyl-L-methionine contacts are provided by residues Asp134 and 163-164 (DL).

The protein belongs to the UPF0677 family.

In terms of biological role, exhibits S-adenosyl-L-methionine-dependent methyltransferase activity. The chain is Putative S-adenosyl-L-methionine-dependent methyltransferase Mvan_1345 from Mycolicibacterium vanbaalenii (strain DSM 7251 / JCM 13017 / BCRC 16820 / KCTC 9966 / NRRL B-24157 / PYR-1) (Mycobacterium vanbaalenii).